The sequence spans 254 residues: Alcohol dehydrogenase (254 aa).

Residue isoleucine 9–asparagine 32 coordinates NAD(+). Serine 138 serves as a coordination point for substrate. Tyrosine 151 functions as the Proton acceptor in the catalytic mechanism.

It belongs to the short-chain dehydrogenases/reductases (SDR) family. As to quaternary structure, homodimer.

It catalyses the reaction a primary alcohol + NAD(+) = an aldehyde + NADH + H(+). The catalysed reaction is a secondary alcohol + NAD(+) = a ketone + NADH + H(+). The sequence is that of Alcohol dehydrogenase (Adh) from Drosophila paulistorum (Fruit fly).